The following is an 87-amino-acid chain: U-actitoxin-Avd3o (87 aa).

The N-terminal stretch at methionine 1–glycine 16 is a signal peptide. Residues cysteine 21 to cysteine 71 enclose the BPTI/Kunitz inhibitor domain. 3 disulfides stabilise this stretch: cysteine 21-cysteine 71, cysteine 30-cysteine 54, and cysteine 46-cysteine 67.

Belongs to the venom Kunitz-type family. Sea anemone type 2 potassium channel toxin subfamily.

Its subcellular location is the secreted. It localises to the nematocyst. In terms of biological role, serine protease inhibitor that inhibits both tissue and plasma kallikreins. Has hemolytic activity. Inhibits voltage-gated potassium channels (Kv). The chain is U-actitoxin-Avd3o from Anemonia viridis (Snakelocks anemone).